We begin with the raw amino-acid sequence, 277 residues long: MKFTKMHGLGNDYIYVDAISQKIENPNEISKFVSDRHFGIGSDGLVLILPSDVADFKMRMFNSDGSEAEMCGNAIRCVGKFVYDKKMTDKSTITIETLAGIKVLEMTIENGKVVLVKVDMGEPILKAEEIPVLSEKHPVIDEEITAKDYCYNFTCVSMGNPHAITYIENVDEFPLEKIGPLFEIHEKFPRKTNVEFVELIDKNTVKMRVWERGAGETLACGTGACAVLTASVLKGYVGRKATVKLLGGDLTIEWNEFDKHIYMTGPATTVFEGEIDI.

Positions 11 and 62 each coordinate substrate. Cys-71 serves as the catalytic Proton donor. Residues 72–73, Asn-160, Asn-193, and 211–212 contribute to the substrate site; these read GN and ER. Cys-220 (proton acceptor) is an active-site residue. 221 to 222 serves as a coordination point for substrate; sequence GT.

It belongs to the diaminopimelate epimerase family. Homodimer.

The protein resides in the cytoplasm. The catalysed reaction is (2S,6S)-2,6-diaminopimelate = meso-2,6-diaminopimelate. It participates in amino-acid biosynthesis; L-lysine biosynthesis via DAP pathway; DL-2,6-diaminopimelate from LL-2,6-diaminopimelate: step 1/1. Catalyzes the stereoinversion of LL-2,6-diaminopimelate (L,L-DAP) to meso-diaminopimelate (meso-DAP), a precursor of L-lysine. The chain is Diaminopimelate epimerase from Methanococcus maripaludis (strain DSM 14266 / JCM 13030 / NBRC 101832 / S2 / LL).